The following is a 98-amino-acid chain: Large ribosomal subunit protein uL23 (98 aa).

This sequence belongs to the universal ribosomal protein uL23 family. As to quaternary structure, part of the 50S ribosomal subunit. Contacts protein L29, and trigger factor when it is bound to the ribosome.

In terms of biological role, one of the early assembly proteins it binds 23S rRNA. One of the proteins that surrounds the polypeptide exit tunnel on the outside of the ribosome. Forms the main docking site for trigger factor binding to the ribosome. In Ruegeria sp. (strain TM1040) (Silicibacter sp.), this protein is Large ribosomal subunit protein uL23.